The chain runs to 1222 residues: ATP-dependent helicase/nuclease subunit A (1222 aa).

A UvrD-like helicase ATP-binding domain is found at 39–495 (QKRTAQQIEA…ILLKENFRSQ (457 aa)). 60–67 (ASAGSGKT) contributes to the ATP binding site. Residues 524–810 (QLIAGSHAQT…NLMTIHKSKG (287 aa)) form the UvrD-like helicase C-terminal domain.

Belongs to the helicase family. AddA subfamily. As to quaternary structure, heterodimer of AddA and AddB/RexB. Mg(2+) is required as a cofactor.

The enzyme catalyses Couples ATP hydrolysis with the unwinding of duplex DNA by translocating in the 3'-5' direction.. It catalyses the reaction ATP + H2O = ADP + phosphate + H(+). The heterodimer acts as both an ATP-dependent DNA helicase and an ATP-dependent, dual-direction single-stranded exonuclease. Recognizes the chi site generating a DNA molecule suitable for the initiation of homologous recombination. The AddA nuclease domain is required for chi fragment generation; this subunit has the helicase and 3' -&gt; 5' nuclease activities. This Streptococcus pyogenes serotype M28 (strain MGAS6180) protein is ATP-dependent helicase/nuclease subunit A.